The sequence spans 103 residues: UPF0145 protein Amet_0532 (103 aa).

It belongs to the UPF0145 family.

This chain is UPF0145 protein Amet_0532, found in Alkaliphilus metalliredigens (strain QYMF).